A 451-amino-acid chain; its full sequence is Probable phosphoglucosamine mutase (451 aa).

The Phosphoserine intermediate role is filled by Ser-96. Positions 96, 233, 235, and 237 each coordinate Mg(2+). Ser-96 carries the post-translational modification Phosphoserine.

Belongs to the phosphohexose mutase family. Mg(2+) is required as a cofactor. Activated by phosphorylation.

It catalyses the reaction alpha-D-glucosamine 1-phosphate = D-glucosamine 6-phosphate. In terms of biological role, catalyzes the conversion of glucosamine-6-phosphate to glucosamine-1-phosphate. The sequence is that of Probable phosphoglucosamine mutase from Pyrococcus abyssi (strain GE5 / Orsay).